A 149-amino-acid chain; its full sequence is Ribonuclease H (149 aa).

The RNase H type-1 domain occupies 1-143; sequence MNAVEIYTDG…ADMLANRGVE (143 aa). Mg(2+) is bound by residues D9, E47, D69, and D135.

Belongs to the RNase H family. In terms of assembly, monomer. The cofactor is Mg(2+).

The protein resides in the cytoplasm. It carries out the reaction Endonucleolytic cleavage to 5'-phosphomonoester.. Functionally, endonuclease that specifically degrades the RNA of RNA-DNA hybrids. This is Ribonuclease H from Albidiferax ferrireducens (strain ATCC BAA-621 / DSM 15236 / T118) (Rhodoferax ferrireducens).